Consider the following 415-residue polypeptide: Prostacyclin receptor (415 aa).

The interval 1-21 (MMASDGHPGPPSVTPGSPLSA) is disordered. At 1–44 (MMASDGHPGPPSVTPGSPLSAGGREWQGMAGSCWNITYVQDSVG) the chain is on the extracellular side. Intrachain disulfides connect C33–C193 and C120–C198. N35 carries N-linked (GlcNAc...) asparagine glycosylation. The chain crosses the membrane as a helical span at residues 45 to 66 (PATSTLMFVAGVVGNGLALGIL). At 67–79 (GARRRSHPSAFAV) the chain is on the cytoplasmic side. A helical transmembrane segment spans residues 80–104 (LVTGLAVTDLLGTCFLSPAVFVAYA). Over 105–122 (RNSSLLGLAHGGTMLCDT) the chain is Extracellular. The helical transmembrane segment at 123 to 143 (FAFAMTFFGLASTLILFAMAV) threads the bilayer. Residues 144–162 (ERCLALSHPYLYAQLDGPR) lie on the Cytoplasmic side of the membrane. A helical membrane pass occupies residues 163-186 (CARFALPSIYAFCCLFCSLPLLGL). Topologically, residues 187-215 (GEHQQYCPGSWCFIRMRSAQPGGCAFSLA) are extracellular. A helical membrane pass occupies residues 216 to 236 (YASLMALLVTSIFFCNGSVTL). At 237–263 (SLYHMYRQQRRHHGSFVPTSRAREDEV) the chain is on the cytoplasmic side. Residues 264–288 (YHLILLALMTVIMAVCSLPLMIRGF) traverse the membrane as a helical segment. Topologically, residues 289 to 301 (TQAIAPDSREMGD) are extracellular. The chain crosses the membrane as a helical span at residues 302 to 322 (LLAFRFNAFNPILDPWVFILF). The Cytoplasmic segment spans residues 323–415 (RKAVFQRLKF…SEAIAACSLC (93 aa)). Residues 349–370 (PLSRPASGRRDPPAPTSLQAKE) form a disordered region. The residue at position 365 (S365) is a Phosphoserine. C412 is subject to Cysteine methyl ester. A lipid anchor (S-farnesyl cysteine) is attached at C412. Residues 413–415 (SLC) constitute a propeptide, removed in mature form.

It belongs to the G-protein coupled receptor 1 family. Interacts (non-isoprenylated C-terminus) with PDZK1. Isoprenylation does not influence ligand binding but is required for efficient coupling to the effectors adenylyl cyclase and phospholipase C.

It is found in the cell membrane. Its function is as follows. Receptor for prostacyclin (prostaglandin I2 or PGI2). The activity of this receptor is mediated by G(s) proteins which activate adenylate cyclase. This Mus musculus (Mouse) protein is Prostacyclin receptor (Ptgir).